A 189-amino-acid polypeptide reads, in one-letter code: Translation initiation factor IF-3 (189 aa).

This sequence belongs to the IF-3 family. In terms of assembly, monomer.

The protein resides in the cytoplasm. IF-3 binds to the 30S ribosomal subunit and shifts the equilibrium between 70S ribosomes and their 50S and 30S subunits in favor of the free subunits, thus enhancing the availability of 30S subunits on which protein synthesis initiation begins. The chain is Translation initiation factor IF-3 from Corynebacterium glutamicum (strain R).